We begin with the raw amino-acid sequence, 314 residues long: tRNA dimethylallyltransferase (314 aa).

The disordered stretch occupies residues 1–25 (MAEEPQRSPAPTSPFAFTVPSNSLS). Residue 40-47 (GPTASGKS) coordinates ATP. Position 42-47 (42-47 (TASGKS)) interacts with substrate.

It belongs to the IPP transferase family. Monomer. It depends on Mg(2+) as a cofactor.

It catalyses the reaction adenosine(37) in tRNA + dimethylallyl diphosphate = N(6)-dimethylallyladenosine(37) in tRNA + diphosphate. Functionally, catalyzes the transfer of a dimethylallyl group onto the adenine at position 37 in tRNAs that read codons beginning with uridine, leading to the formation of N6-(dimethylallyl)adenosine (i(6)A). The polypeptide is tRNA dimethylallyltransferase (Cereibacter sphaeroides (strain ATCC 17023 / DSM 158 / JCM 6121 / CCUG 31486 / LMG 2827 / NBRC 12203 / NCIMB 8253 / ATH 2.4.1.) (Rhodobacter sphaeroides)).